Here is a 261-residue protein sequence, read N- to C-terminus: Pyrroline-5-carboxylate reductase (261 aa).

The protein belongs to the pyrroline-5-carboxylate reductase family.

It is found in the cytoplasm. The enzyme catalyses L-proline + NADP(+) = (S)-1-pyrroline-5-carboxylate + NADPH + 2 H(+). It catalyses the reaction L-proline + NAD(+) = (S)-1-pyrroline-5-carboxylate + NADH + 2 H(+). It participates in amino-acid biosynthesis; L-proline biosynthesis; L-proline from L-glutamate 5-semialdehyde: step 1/1. Catalyzes the reduction of 1-pyrroline-5-carboxylate (PCA) to L-proline. The chain is Pyrroline-5-carboxylate reductase from Thermus thermophilus (strain ATCC BAA-163 / DSM 7039 / HB27).